A 608-amino-acid polypeptide reads, in one-letter code: ATP-citrate synthase beta chain protein 2 (608 aa).

Residues 214 to 234 (ILRFNNIPQIKMMVVLGELGG) and 265 to 291 (FKSEVQFGHAGAKSGGEMESAQAKNQA) each bind ATP. Glu-231 is a Mg(2+) binding site. The Tele-phosphohistidine intermediate role is filled by His-273. Position 292 to 302 (292 to 302 (LIDAGAIVPTS)) interacts with CoA.

The protein belongs to the succinate/malate CoA ligase alpha subunit family. In terms of assembly, heterooctamer of 4 alpha and 4 beta chains. Expressed in trichomes, epidermal leaf cells, anther tapetal cells, stigma and in young vascular bundles of expanding leaves, cotyledons, roots, pedicel of flowers and siliques.

The protein localises to the cytoplasm. Its subcellular location is the cytosol. The catalysed reaction is oxaloacetate + acetyl-CoA + ADP + phosphate = citrate + ATP + CoA. Functionally, ATP citrate-lyase is the primary enzyme responsible for the synthesis of cytosolic acetyl-CoA, used for the elongation of fatty acids and biosynthesis of isoprenoids, flavonoids and malonated derivatives. May supply substrate to the cytosolic acetyl-CoA carboxylase, which generates the malonyl-CoA used for the synthesis of a multitude of compounds, including very long chain fatty acids and flavonoids. Required for normal growth and development and elongation of C18 fatty acids to C20 to C24 fatty acids in seeds. n contrast to all known animal ACL enzymes having a homomeric structure, plant ACLs are composed of alpha and beta chains. The chain is ATP-citrate synthase beta chain protein 2 from Arabidopsis thaliana (Mouse-ear cress).